We begin with the raw amino-acid sequence, 373 residues long: Mannitol-1-phosphate 5-dehydrogenase (373 aa).

Residue 3–14 (ALHFGAGNIGRG) participates in NAD(+) binding.

The protein belongs to the mannitol dehydrogenase family.

It carries out the reaction D-mannitol 1-phosphate + NAD(+) = beta-D-fructose 6-phosphate + NADH + H(+). The sequence is that of Mannitol-1-phosphate 5-dehydrogenase from Bacillus pumilus (strain SAFR-032).